A 266-amino-acid polypeptide reads, in one-letter code: Thymidylate synthase (266 aa).

R24 contacts dUMP. Position 54 (H54) interacts with (6R)-5,10-methylene-5,6,7,8-tetrahydrofolate. 129–130 serves as a coordination point for dUMP; sequence RR. The active-site Nucleophile is C149. Residues 169-172, N180, and 210-212 each bind dUMP; these read RSAD and HIY. D172 is a (6R)-5,10-methylene-5,6,7,8-tetrahydrofolate binding site. A265 lines the (6R)-5,10-methylene-5,6,7,8-tetrahydrofolate pocket.

It belongs to the thymidylate synthase family. Bacterial-type ThyA subfamily. Homodimer.

It localises to the cytoplasm. It carries out the reaction dUMP + (6R)-5,10-methylene-5,6,7,8-tetrahydrofolate = 7,8-dihydrofolate + dTMP. It functions in the pathway pyrimidine metabolism; dTTP biosynthesis. Functionally, catalyzes the reductive methylation of 2'-deoxyuridine-5'-monophosphate (dUMP) to 2'-deoxythymidine-5'-monophosphate (dTMP) while utilizing 5,10-methylenetetrahydrofolate (mTHF) as the methyl donor and reductant in the reaction, yielding dihydrofolate (DHF) as a by-product. This enzymatic reaction provides an intracellular de novo source of dTMP, an essential precursor for DNA biosynthesis. The sequence is that of Thymidylate synthase from Corynebacterium glutamicum (strain R).